Consider the following 124-residue polypeptide: UPF0231 protein Sama_0645 (124 aa).

It belongs to the UPF0231 family.

The protein is UPF0231 protein Sama_0645 of Shewanella amazonensis (strain ATCC BAA-1098 / SB2B).